A 398-amino-acid chain; its full sequence is Phosphoglycerate kinase (398 aa).

Substrate contacts are provided by residues 21–23 (DFN), arginine 36, 59–62 (HLGR), arginine 119, and arginine 157. ATP is bound by residues lysine 208, glycine 296, glutamate 327, and 354 to 357 (GGDS).

This sequence belongs to the phosphoglycerate kinase family. In terms of assembly, monomer.

Its subcellular location is the cytoplasm. The enzyme catalyses (2R)-3-phosphoglycerate + ATP = (2R)-3-phospho-glyceroyl phosphate + ADP. It functions in the pathway carbohydrate degradation; glycolysis; pyruvate from D-glyceraldehyde 3-phosphate: step 2/5. This chain is Phosphoglycerate kinase, found in Streptococcus pyogenes serotype M18 (strain MGAS8232).